The primary structure comprises 160 residues: Cytochrome b6-f complex subunit 4 (160 aa).

3 helical membrane passes run 36-56 (LLYVFPLTMLGTLTCIVGLSV), 95-115 (LLGVLAMAAVPLGLITVPFIE), and 131-151 (LTFIFGFFTAVWLGIGACVPI).

The protein belongs to the cytochrome b family. PetD subfamily. In terms of assembly, the 4 large subunits of the cytochrome b6-f complex are cytochrome b6, subunit IV (17 kDa polypeptide, petD), cytochrome f and the Rieske protein, while the 4 small subunits are petG, petL, petM and petN. The complex functions as a dimer.

It localises to the plastid. The protein resides in the chloroplast thylakoid membrane. Functionally, component of the cytochrome b6-f complex, which mediates electron transfer between photosystem II (PSII) and photosystem I (PSI), cyclic electron flow around PSI, and state transitions. This is Cytochrome b6-f complex subunit 4 from Phaeodactylum tricornutum (strain CCAP 1055/1).